Consider the following 380-residue polypeptide: Apelin receptor (380 aa).

Residues 1–30 (MEEGGDFDNYYGADNQSECEYTDWKSSGAL) are Extracellular-facing. Asn15 is a glycosylation site (N-linked (GlcNAc...) asparagine). 2 disulfide bridges follow: Cys19/Cys281 and Cys102/Cys181. Residues 31–54 (IPAIYMLVFLLGTTGNGLVLWTVF) form a helical membrane-spanning segment. Residues 55-64 (RSSREKRRSA) lie on the Cytoplasmic side of the membrane. A helical transmembrane segment spans residues 65-86 (DIFIASLAVADLTFVVTLPLWA). The Extracellular segment spans residues 87–99 (TYTYRDYDWPFGT). A helical transmembrane segment spans residues 100 to 125 (FSCKLSSYLIFVNMYASVFCLTGLSF). Residues 126–146 (DRYLAIVRPVANARLRLRVSG) are Cytoplasmic-facing. The chain crosses the membrane as a helical span at residues 147–164 (AVATAVLWVLAALLAMPV). Residues 165 to 198 (MVFRTTGDLENTTKVQCYMDYSMVATVSSDWAWE) are Extracellular-facing. A glycan (N-linked (GlcNAc...) asparagine) is linked at Asn175. The helical transmembrane segment at 199–223 (VGLGVSSTTVGFVVPFTIMLTCYFF) threads the bilayer. Residues 224–246 (IAQTIAGHFRKERIEGLRKRRRL) lie on the Cytoplasmic side of the membrane. The helical transmembrane segment at 247–270 (LSIIVVLVVTFALCWMPYHLVKTL) threads the bilayer. At 271-289 (YMLGSLLHWPCDFDLFLMN) the chain is on the extracellular side. Residues 290–312 (VFPYCTCISYVNSCLNPFLYAFF) form a helical membrane-spanning segment. Over 313–380 (DPRFRQACTS…PYSQETLVVD (68 aa)) the chain is Cytoplasmic. The segment covering 342–351 (KSASYSSGHS) has biased composition (low complexity). The disordered stretch occupies residues 342–380 (KSASYSSGHSQGPGPNMGKGGEQMHEKSIPYSQETLVVD). A compositionally biased stretch (polar residues) spans 371–380 (PYSQETLVVD).

Belongs to the G-protein coupled receptor 1 family. As to quaternary structure, homodimer; dimerization inhibits APLNR-mediated G protein and beta-arrestin signaling pathways compared to monomeric APLNR.

It is found in the cell membrane. G protein-coupled receptor for peptide hormones apelin (APLN) and apelin receptor early endogenous ligand (APELA/ELA), that plays a role in the regulation of normal cardiovascular function and fluid homeostasis. When acting as apelin receptor, activates both G(i) protein pathway that inhibits adenylate cyclase activity, and the beta-arrestin pathway that promotes internalization of the receptor. APLNR/APJ also functions as mechanoreceptor that is activated by pathological stimuli in a G-protein-independent fashion to induce beta-arrestin signaling, hence eliciting cardiac hypertrophy. However, the presence of apelin ligand blunts cardiac hypertrophic induction from APLNR/APJ on response to pathological stimuli. Plays a key role in early development such as gastrulation, blood vessels formation and heart morphogenesis by acting as a APELA receptor. May promote angioblast migration toward the embryonic midline, i.e. the position of the future vessel formation, during vasculogenesis. Promotes sinus venosus (SV)-derived endothelial cells migration into the developing heart to promote coronary blood vessel development. Also plays a role in various processes in adults such as regulation of blood vessel formation, blood pressure, heart contractility and heart failure. In terms of biological role, (Microbial infection) Alternative coreceptor with CD4 for HIV-1 infection; may be involved in the development of AIDS dementia. The chain is Apelin receptor (APLNR) from Macaca mulatta (Rhesus macaque).